Reading from the N-terminus, the 162-residue chain is NADH-quinone oxidoreductase subunit I (162 aa).

2 consecutive 4Fe-4S ferredoxin-type domains span residues 52–82 (LRRY…IEAG) and 93–122 (VRYD…EGPN). Residues C62, C65, C68, C72, C102, C105, C108, and C112 each coordinate [4Fe-4S] cluster.

This sequence belongs to the complex I 23 kDa subunit family. As to quaternary structure, NDH-1 is composed of 14 different subunits. Subunits NuoA, H, J, K, L, M, N constitute the membrane sector of the complex. [4Fe-4S] cluster serves as cofactor.

The protein localises to the cell inner membrane. It catalyses the reaction a quinone + NADH + 5 H(+)(in) = a quinol + NAD(+) + 4 H(+)(out). NDH-1 shuttles electrons from NADH, via FMN and iron-sulfur (Fe-S) centers, to quinones in the respiratory chain. The immediate electron acceptor for the enzyme in this species is believed to be ubiquinone. Couples the redox reaction to proton translocation (for every two electrons transferred, four hydrogen ions are translocated across the cytoplasmic membrane), and thus conserves the redox energy in a proton gradient. The sequence is that of NADH-quinone oxidoreductase subunit I from Bradyrhizobium sp. (strain BTAi1 / ATCC BAA-1182).